The chain runs to 539 residues: Copine-C (539 aa).

C2 domains follow at residues 1–120 and 128–251; these read MIPS…KIVA and VTGK…PLIN. Ca(2+) contacts are provided by leucine 23, aspartate 24, aspartate 30, aspartate 83, aspartate 85, and aspartate 98. The VWFA domain occupies 290–507; the sequence is SLMTAIDCTG…ALAQETLKEI (218 aa).

This sequence belongs to the copine family. The cofactor is Ca(2+).

This chain is Copine-C (cpnC), found in Dictyostelium discoideum (Social amoeba).